An 894-amino-acid polypeptide reads, in one-letter code: Alanine--tRNA ligase (894 aa).

H569, H573, C683, and H687 together coordinate Zn(2+).

This sequence belongs to the class-II aminoacyl-tRNA synthetase family. The cofactor is Zn(2+).

It is found in the cytoplasm. It carries out the reaction tRNA(Ala) + L-alanine + ATP = L-alanyl-tRNA(Ala) + AMP + diphosphate. Catalyzes the attachment of alanine to tRNA(Ala) in a two-step reaction: alanine is first activated by ATP to form Ala-AMP and then transferred to the acceptor end of tRNA(Ala). Also edits incorrectly charged Ser-tRNA(Ala) and Gly-tRNA(Ala) via its editing domain. In Chloroflexus aurantiacus (strain ATCC 29366 / DSM 635 / J-10-fl), this protein is Alanine--tRNA ligase.